Here is a 459-residue protein sequence, read N- to C-terminus: Argininosuccinate lyase (459 aa).

This sequence belongs to the lyase 1 family. Argininosuccinate lyase subfamily.

The protein resides in the cytoplasm. It carries out the reaction 2-(N(omega)-L-arginino)succinate = fumarate + L-arginine. Its pathway is amino-acid biosynthesis; L-arginine biosynthesis; L-arginine from L-ornithine and carbamoyl phosphate: step 3/3. This Chromobacterium violaceum (strain ATCC 12472 / DSM 30191 / JCM 1249 / CCUG 213 / NBRC 12614 / NCIMB 9131 / NCTC 9757 / MK) protein is Argininosuccinate lyase.